A 138-amino-acid chain; its full sequence is Acidic phospholipase A2 2 (138 aa).

Positions M1 to G16 are cleaved as a signal peptide. 7 disulfide bridges follow: C42–C131, C44–C60, C59–C111, C65–C138, C66–C104, C73–C97, and C91–C102. 3 residues coordinate Ca(2+): Y43, G45, and G47. The active site involves H63. D64 serves as a coordination point for Ca(2+). D105 is an active-site residue.

In terms of assembly, monomer. Requires Ca(2+) as cofactor. In terms of tissue distribution, expressed by the venom gland.

It localises to the secreted. It carries out the reaction a 1,2-diacyl-sn-glycero-3-phosphocholine + H2O = a 1-acyl-sn-glycero-3-phosphocholine + a fatty acid + H(+). Functionally, snake venom phospholipase that inhibits ADP- and collagen-induced human platelet aggregation. This inhibition is completely inhibited by abolition of catalytic activity in case of collagen as inducer and partially inhibited in case of ADP as inducer. PLA2 catalyzes the calcium-dependent hydrolysis of the 2-acyl groups in 3-sn-phosphoglycerides. The protein is Acidic phospholipase A2 2 of Macrovipera lebetinus (Levantine viper).